Consider the following 130-residue polypeptide: Protein Wnt-9 (130 aa).

Serine 1 carries the O-palmitoleoyl serine; by PORCN lipid modification. The interval 41 to 69 (AGERTIARSRRRPREQRGQRRPKVSDGAL) is disordered. Over residues 47–62 (ARSRRRPREQRGQRRP) the composition is skewed to basic residues. N-linked (GlcNAc...) asparagine glycosylation is present at asparagine 97. The cysteines at positions 100 and 111 are disulfide-linked.

This sequence belongs to the Wnt family. In terms of processing, palmitoleoylation is required for efficient binding to frizzled receptors. Depalmitoleoylation leads to Wnt signaling pathway inhibition.

Its subcellular location is the secreted. It localises to the extracellular space. The protein resides in the extracellular matrix. In terms of biological role, ligand for members of the frizzled family of seven transmembrane receptors. Probable developmental protein. May be a signaling molecule which affects the development of discrete regions of tissues. Is likely to signal over only few cell diameters. This chain is Protein Wnt-9 (WNT-9), found in Eptatretus stoutii (Pacific hagfish).